The following is a 505-amino-acid chain: ATP synthase subunit alpha (505 aa).

170-177 (GDRQTGKS) contributes to the ATP binding site.

This sequence belongs to the ATPase alpha/beta chains family. As to quaternary structure, F-type ATPases have 2 components, CF(1) - the catalytic core - and CF(0) - the membrane proton channel. CF(1) has five subunits: alpha(3), beta(3), gamma(1), delta(1), epsilon(1). CF(0) has four main subunits: a(1), b(1), b'(1) and c(9-12).

The protein resides in the cellular thylakoid membrane. The enzyme catalyses ATP + H2O + 4 H(+)(in) = ADP + phosphate + 5 H(+)(out). Its function is as follows. Produces ATP from ADP in the presence of a proton gradient across the membrane. The alpha chain is a regulatory subunit. The polypeptide is ATP synthase subunit alpha (Prochlorococcus marinus (strain MIT 9215)).